A 200-amino-acid chain; its full sequence is Glycerol-3-phosphate acyltransferase (200 aa).

Helical transmembrane passes span 1–21 (MITV…FAVV), 51–71 (VAAA…VVVA), 84–104 (VIAS…FLAF), 116–136 (ILLG…IIVA), and 159–179 (FLLQ…LLIL).

It belongs to the PlsY family. In terms of assembly, probably interacts with PlsX.

It localises to the cell inner membrane. It catalyses the reaction an acyl phosphate + sn-glycerol 3-phosphate = a 1-acyl-sn-glycero-3-phosphate + phosphate. It participates in lipid metabolism; phospholipid metabolism. In terms of biological role, catalyzes the transfer of an acyl group from acyl-phosphate (acyl-PO(4)) to glycerol-3-phosphate (G3P) to form lysophosphatidic acid (LPA). This enzyme utilizes acyl-phosphate as fatty acyl donor, but not acyl-CoA or acyl-ACP. This is Glycerol-3-phosphate acyltransferase from Nitrosomonas eutropha (strain DSM 101675 / C91 / Nm57).